A 312-amino-acid chain; its full sequence is Ubiquinone biosynthesis O-methyltransferase, mitochondrial (312 aa).

The N-terminal 32 residues, 1-32 (MLLRSRFLKVIHVRKQLSACSRFAIQTQTRCK), are a transit peptide targeting the mitochondrion. Positions 68, 130, 153, and 196 each coordinate S-adenosyl-L-methionine. Residues glutamate 197, glutamate 200, and histidine 201 each contribute to the Mg(2+) site.

This sequence belongs to the class I-like SAM-binding methyltransferase superfamily. UbiG/COQ3 family. In terms of assembly, component of a multi-subunit COQ enzyme complex, composed of at least COQ3, COQ4, COQ5, COQ6, COQ7 and COQ9. Interacts directly with COQ4. Mg(2+) is required as a cofactor.

It localises to the mitochondrion inner membrane. It carries out the reaction 3,4-dihydroxy-5-(all-trans-hexaprenyl)benzoate + S-adenosyl-L-methionine = 4-hydroxy-3-methoxy-5-(all-trans-hexaprenyl)benzoate + S-adenosyl-L-homocysteine + H(+). The catalysed reaction is a 3-demethylubiquinone + S-adenosyl-L-methionine = a ubiquinone + S-adenosyl-L-homocysteine. It catalyses the reaction 3-demethylubiquinol-6 + S-adenosyl-L-methionine = ubiquinol-6 + S-adenosyl-L-homocysteine + H(+). It participates in cofactor biosynthesis; ubiquinone biosynthesis. Regulated in response to catabolite repression. O-methyltransferase required for two non-consecutive steps during ubiquinone biosynthesis. Catalyzes the 2 O-methylation of 3,4-dihydroxy-5-(all-trans-hexaprenyl)benzoic acid into 4-hydroxy-3-methoxy-5-(all-trans-hexaprenyl)benzoic acid. Also catalyzes the last step of ubiquinone biosynthesis by mediating methylation of 3-demethylubiquinone into ubiquinone. Also able to mediate the methylation of 3-demethylubiquinol-6 into ubiquinol-6. The polypeptide is Ubiquinone biosynthesis O-methyltransferase, mitochondrial (Saccharomyces cerevisiae (strain ATCC 204508 / S288c) (Baker's yeast)).